A 645-amino-acid polypeptide reads, in one-letter code: UPF0313 protein CLB_0243 (645 aa).

Positions 295–566 (AIKEVKFSIT…RMQRALLQFS (272 aa)) constitute a Radical SAM core domain. [4Fe-4S] cluster contacts are provided by cysteine 309, cysteine 313, and cysteine 316. The tract at residues 598–645 (NKPYKKSHKKNNAKNNNNHYNKNNNYNKNKDISKKNKKNSLSKHKKRK) is disordered. Residues 600-609 (PYKKSHKKNN) show a composition bias toward basic residues. The span at 610–624 (AKNNNNHYNKNNNYN) shows a compositional bias: low complexity. Basic residues predominate over residues 632–645 (KNKKNSLSKHKKRK).

Belongs to the UPF0313 family. It depends on [4Fe-4S] cluster as a cofactor.

The polypeptide is UPF0313 protein CLB_0243 (Clostridium botulinum (strain ATCC 19397 / Type A)).